A 279-amino-acid chain; its full sequence is Probable phosphatase phospho1 (279 aa).

Asp41 functions as the Nucleophile in the catalytic mechanism. Asp41 and Asp43 together coordinate Mg(2+). Catalysis depends on Asp43, which acts as the Proton donor. 2 residues coordinate substrate: Asp52 and Asp133. Asp215 is a binding site for Mg(2+).

It belongs to the HAD-like hydrolase superfamily. PHOSPHO family. Mg(2+) serves as cofactor.

Its subcellular location is the extracellular vesicle. It carries out the reaction phosphoethanolamine + H2O = ethanolamine + phosphate. The catalysed reaction is phosphocholine + H2O = choline + phosphate. Functionally, phosphatase that has a high activity toward phosphoethanolamine (PEA) and phosphocholine (PCho). Involved in the generation of inorganic phosphate for bone mineralization. This is Probable phosphatase phospho1 (phospho1) from Danio rerio (Zebrafish).